We begin with the raw amino-acid sequence, 170 residues long: MEGIIRGRVWRFGDNVDTDMIIPGRYLRTFSLDELASHVMEGARPEFASQVRKGDIIVAGRNFGCGSSREQAPVALKHAGVVAIIAESFARIFYRNAINIGLPVIMAKVDADDGDEVSIDLRSGQIRNLTAGSEYRMKPFNDYMLSILEDGGLVNHYLKTIDTGISGDEG.

The YLRT signature appears at 26–29; it reads YLRT.

This sequence belongs to the LeuD family. LeuD type 2 subfamily. Heterotetramer of 2 HacA and 2 HacB proteins.

The enzyme catalyses (2R)-homocitrate = (2R,3S)-homoisocitrate. It carries out the reaction (2R)-homocitrate = cis-homoaconitate + H2O. The catalysed reaction is (2R,3S)-homoisocitrate = cis-homoaconitate + H2O. It catalyses the reaction cis-(homo)2aconitate + H2O = (2R,3S)-iso(homo)2citrate. The enzyme catalyses cis-(homo)3aconitate + H2O = (2R,3S)-iso(homo)3citrate. It functions in the pathway organic acid metabolism; 2-oxosuberate biosynthesis. Functionally, component of a hydro-lyase with broad substrate specificity for cis-unsaturated tricarboxylic acids. Catalyzes both the reversible dehydration of (R)-homocitrate ((R)-2-hydroxybutane-1,2,4-tricarboxylate) to produce cis-homoaconitate ((Z)-but-1-ene-1,2,4-tricarboxylate), and its hydration to homoisocitrate ((1R,2S)-1-hydroxybutane-1,2,4-tricarboxylate). Is also able to hydrate the analogous longer chain substrates cis-homo(2)-aconitate, cis-homo(3)-aconitate. These reactions are part of the biosynthesis pathway of coenzyme B. The sequence is that of Methanogen homoaconitase small subunit (hacB) from Methanothermobacter thermautotrophicus (strain ATCC 29096 / DSM 1053 / JCM 10044 / NBRC 100330 / Delta H) (Methanobacterium thermoautotrophicum).